We begin with the raw amino-acid sequence, 366 residues long: tRNA-specific 2-thiouridylase MnmA (366 aa).

Residues 10-17 (GLSGGVDS) and M36 contribute to the ATP site. The interval 96–98 (NPD) is interaction with target base in tRNA. C101 serves as the catalytic Nucleophile. A disulfide bridge connects residues C101 and C197. G125 is a binding site for ATP. Residues 147–149 (KDQ) form an interaction with tRNA region. The Cysteine persulfide intermediate role is filled by C197. Residues 309 to 310 (RY) form an interaction with tRNA region.

Belongs to the MnmA/TRMU family.

The protein localises to the cytoplasm. The catalysed reaction is S-sulfanyl-L-cysteinyl-[protein] + uridine(34) in tRNA + AH2 + ATP = 2-thiouridine(34) in tRNA + L-cysteinyl-[protein] + A + AMP + diphosphate + H(+). In terms of biological role, catalyzes the 2-thiolation of uridine at the wobble position (U34) of tRNA, leading to the formation of s(2)U34. This is tRNA-specific 2-thiouridylase MnmA from Alkalilimnicola ehrlichii (strain ATCC BAA-1101 / DSM 17681 / MLHE-1).